The following is a 140-amino-acid chain: Lipoprotein MlpD (140 aa).

The first 17 residues, 1–17 (MKIINILFCLFLLMLNG), serve as a signal peptide directing secretion. Cys18 carries the N-palmitoyl cysteine lipid modification. Residue Cys18 is the site of S-diacylglycerol cysteine attachment. The segment at 22–53 (DTNNSQTKSRQKRDLTQKEATQEKPKSKEELL) is disordered. Positions 33-53 (KRDLTQKEATQEKPKSKEELL) are enriched in basic and acidic residues.

The protein belongs to the Multicopy lipoprotein (Mlp) family.

The protein localises to the cell outer membrane. Its function is as follows. An outer membrane protein that may participate in pathogenesis. Some human Lyme disease patients have antibodies against this protein. The Mlp proteins probably undergo intragenic recombination, generating new alleles. The chain is Lipoprotein MlpD from Borreliella burgdorferi (strain ATCC 35210 / DSM 4680 / CIP 102532 / B31) (Borrelia burgdorferi).